Reading from the N-terminus, the 176-residue chain is Membrane-anchored junction protein (176 aa).

At 1–151 the chain is on the nuclear side; it reads MSLKPFTYPF…QHNSPPPKER (151 aa). Residues 59–150 are disordered; the sequence is AVMRKRKHMD…LQHNSPPPKE (92 aa). Residues 95-107 are compositionally biased toward basic and acidic residues; sequence PPVETRRNRERKT. Positions 108–120 are enriched in polar residues; sequence QQGLQETLASDIT. A helical membrane pass occupies residues 152–170; it reads AATGFFGFLSSLFPFRYFF. The Perinuclear space portion of the chain corresponds to 171-176; sequence RKSSHS.

Belongs to the MAJIN family. Component of the MAJIN-TERB1-TERB2 complex, composed of MAJIN, TERB1 and TERB2.

It localises to the nucleus inner membrane. The protein resides in the chromosome. It is found in the telomere. Its function is as follows. Meiosis-specific telomere-associated protein involved in meiotic telomere attachment to the nucleus inner membrane, a crucial step for homologous pairing and synapsis. Component of the MAJIN-TERB1-TERB2 complex, which promotes telomere cap exchange by mediating attachment of telomeric DNA to the inner nuclear membrane and replacement of the protective cap of telomeric chromosomes: in early meiosis, the MAJIN-TERB1-TERB2 complex associates with telomeric DNA and the shelterin/telosome complex. During prophase, the complex matures and promotes release of the shelterin/telosome complex from telomeric DNA. In the complex, MAJIN acts as the anchoring subunit to the nucleus inner membrane. MAJIN shows DNA-binding activity, possibly for the stabilization of telomere attachment on the nucleus inner membrane. This Homo sapiens (Human) protein is Membrane-anchored junction protein.